Reading from the N-terminus, the 345-residue chain is S-adenosylmethionine:tRNA ribosyltransferase-isomerase (345 aa).

The protein belongs to the QueA family. Monomer.

The protein resides in the cytoplasm. It carries out the reaction 7-aminomethyl-7-carbaguanosine(34) in tRNA + S-adenosyl-L-methionine = epoxyqueuosine(34) in tRNA + adenine + L-methionine + 2 H(+). The protein operates within tRNA modification; tRNA-queuosine biosynthesis. In terms of biological role, transfers and isomerizes the ribose moiety from AdoMet to the 7-aminomethyl group of 7-deazaguanine (preQ1-tRNA) to give epoxyqueuosine (oQ-tRNA). This is S-adenosylmethionine:tRNA ribosyltransferase-isomerase from Shewanella oneidensis (strain ATCC 700550 / JCM 31522 / CIP 106686 / LMG 19005 / NCIMB 14063 / MR-1).